The sequence spans 515 residues: ATP synthase subunit alpha (515 aa).

Position 171 to 178 (171 to 178 (GDRQTGKT)) interacts with ATP.

It belongs to the ATPase alpha/beta chains family. In terms of assembly, F-type ATPases have 2 components, CF(1) - the catalytic core - and CF(0) - the membrane proton channel. CF(1) has five subunits: alpha(3), beta(3), gamma(1), delta(1), epsilon(1). CF(0) has three main subunits: a(1), b(2) and c(9-12). The alpha and beta chains form an alternating ring which encloses part of the gamma chain. CF(1) is attached to CF(0) by a central stalk formed by the gamma and epsilon chains, while a peripheral stalk is formed by the delta and b chains.

Its subcellular location is the cell inner membrane. The enzyme catalyses ATP + H2O + 4 H(+)(in) = ADP + phosphate + 5 H(+)(out). Produces ATP from ADP in the presence of a proton gradient across the membrane. The alpha chain is a regulatory subunit. In Xanthomonas oryzae pv. oryzae (strain MAFF 311018), this protein is ATP synthase subunit alpha.